Here is a 157-residue protein sequence, read N- to C-terminus: Crossover junction endodeoxyribonuclease RuvC (157 aa).

Active-site residues include D7, E67, and D140. Positions 7, 67, and 140 each coordinate Mg(2+).

The protein belongs to the RuvC family. In terms of assembly, homodimer which binds Holliday junction (HJ) DNA. The HJ becomes 2-fold symmetrical on binding to RuvC with unstacked arms; it has a different conformation from HJ DNA in complex with RuvA. In the full resolvosome a probable DNA-RuvA(4)-RuvB(12)-RuvC(2) complex forms which resolves the HJ. It depends on Mg(2+) as a cofactor.

It is found in the cytoplasm. The catalysed reaction is Endonucleolytic cleavage at a junction such as a reciprocal single-stranded crossover between two homologous DNA duplexes (Holliday junction).. In terms of biological role, the RuvA-RuvB-RuvC complex processes Holliday junction (HJ) DNA during genetic recombination and DNA repair. Endonuclease that resolves HJ intermediates. Cleaves cruciform DNA by making single-stranded nicks across the HJ at symmetrical positions within the homologous arms, yielding a 5'-phosphate and a 3'-hydroxyl group; requires a central core of homology in the junction. The consensus cleavage sequence is 5'-(A/T)TT(C/G)-3'. Cleavage occurs on the 3'-side of the TT dinucleotide at the point of strand exchange. HJ branch migration catalyzed by RuvA-RuvB allows RuvC to scan DNA until it finds its consensus sequence, where it cleaves and resolves the cruciform DNA. This Thermosipho melanesiensis (strain DSM 12029 / CIP 104789 / BI429) protein is Crossover junction endodeoxyribonuclease RuvC.